A 150-amino-acid polypeptide reads, in one-letter code: Large ribosomal subunit protein bL9 (150 aa).

This sequence belongs to the bacterial ribosomal protein bL9 family.

Functionally, binds to the 23S rRNA. This Paraburkholderia phymatum (strain DSM 17167 / CIP 108236 / LMG 21445 / STM815) (Burkholderia phymatum) protein is Large ribosomal subunit protein bL9.